A 417-amino-acid chain; its full sequence is MSKITKIKGFADLFPPESDVFTRMESVARQVFGRYGFVELRTPILERTDLFCRSIGTETDVVQKEMYTFPDRKDRSLTMRPEATAGVMRAYIESGRHTQEPVSKLFTSGPMFRYERPQKGRMRQFHQINCEVLGPVEPHADAELVLMLMRFLTELGLTGLSLQINSLGCKECRPLYRKALSDFLASIDNAALCEDCRRRMETNPLRVLDCKVPGCRELTANAPTILEHNCPECRTHFDAVLRILDSRNVPYVLNDRLVRGLDYYNRTTFEVVSDSIGSQGSVAGGGRYDGLISQLGGPDVPGVGFACGMERLALMMPGADAPRPHFHVAVLDPAAQDAALLLAEDLRAQGLTGSVGFGAGSIKSRMRLAGKSGARACLILGGDELAAGTVVVKDMDSGEQETIGRDAVAARLLAAGA.

Belongs to the class-II aminoacyl-tRNA synthetase family. Homodimer.

It localises to the cytoplasm. The enzyme catalyses tRNA(His) + L-histidine + ATP = L-histidyl-tRNA(His) + AMP + diphosphate + H(+). This is Histidine--tRNA ligase from Nitratidesulfovibrio vulgaris (strain ATCC 29579 / DSM 644 / CCUG 34227 / NCIMB 8303 / VKM B-1760 / Hildenborough) (Desulfovibrio vulgaris).